A 456-amino-acid polypeptide reads, in one-letter code: Probable glycine dehydrogenase (decarboxylating) subunit 1 (456 aa).

This sequence belongs to the GcvP family. N-terminal subunit subfamily. In terms of assembly, the glycine cleavage system is composed of four proteins: P, T, L and H. In this organism, the P 'protein' is a heterodimer of two subunits.

The catalysed reaction is N(6)-[(R)-lipoyl]-L-lysyl-[glycine-cleavage complex H protein] + glycine + H(+) = N(6)-[(R)-S(8)-aminomethyldihydrolipoyl]-L-lysyl-[glycine-cleavage complex H protein] + CO2. Functionally, the glycine cleavage system catalyzes the degradation of glycine. The P protein binds the alpha-amino group of glycine through its pyridoxal phosphate cofactor; CO(2) is released and the remaining methylamine moiety is then transferred to the lipoamide cofactor of the H protein. The chain is Probable glycine dehydrogenase (decarboxylating) subunit 1 from Legionella pneumophila (strain Corby).